The chain runs to 408 residues: ORC1-type DNA replication protein 15 (408 aa).

Residues 60 to 64 (VGKTA), Y208, and R220 contribute to the ATP site.

It belongs to the CDC6/cdc18 family.

Functionally, involved in regulation of DNA replication. The chain is ORC1-type DNA replication protein 15 (cdc6o) from Haloarcula marismortui (strain ATCC 43049 / DSM 3752 / JCM 8966 / VKM B-1809) (Halobacterium marismortui).